Here is a 460-residue protein sequence, read N- to C-terminus: Dynactin subunit 4 (460 aa).

Position 2 is an N-acetylalanine (A2). A coiled-coil region spans residues 152 to 172; sequence QQLAQKEKVERDRKKLARRRN. A Phosphoserine modification is found at S196. K215 is covalently cross-linked (Glycyl lysine isopeptide (Lys-Gly) (interchain with G-Cter in SUMO2)). T407 carries the post-translational modification Phosphothreonine.

Belongs to the dynactin subunit 4 family. As to quaternary structure, subunit of dynactin, a multiprotein complex part of a tripartite complex with dynein and a adapter, such as BICDL1, BICD2 or HOOK3. The dynactin complex is built around ACTR1A/ACTB filament and consists of an actin-related filament composed of a shoulder domain, a pointed end and a barbed end. Its length is defined by its flexible shoulder domain. The soulder is composed of 2 DCTN1 subunits, 4 DCTN2 and 2 DCTN3. The 4 DCNT2 (via N-terminus) bind the ACTR1A filament and act as molecular rulers to determine the length. The pointed end is important for binding dynein-dynactin cargo adapters. Consists of 4 subunits: ACTR10, DCNT4, DCTN5 and DCTN6. The barbed end is composed of a CAPZA1:CAPZB heterodimers, which binds ACTR1A/ACTB filament and dynactin and stabilizes dynactin. Interacts with ATP7B, but not ATP7A, in a copper-dependent manner. Interacts with ANK2; this interaction is required for localization at costameres. Interacts with N4BP2L1.

The protein resides in the cytoplasm. It is found in the cytoskeleton. The protein localises to the microtubule organizing center. It localises to the centrosome. Its subcellular location is the stress fiber. The protein resides in the cell cortex. It is found in the myofibril. The protein localises to the sarcomere. Functionally, part of the dynactin complex that activates the molecular motor dynein for ultra-processive transport along microtubules. This is Dynactin subunit 4 (DCTN4) from Pongo abelii (Sumatran orangutan).